We begin with the raw amino-acid sequence, 489 residues long: MELNELQQQRLAKLERLRAAGIDPYPPRAQRTHTIGEVLAGFDQLMDRGEQVTVAGRIVGARRVLGKLAFAHIEDESGRIQLWLSRGDLGDEWFDRFRDDLDTFDIVEASGTLRRTQRGEPSVFVTRMGVLAKSLNPPPEKWHGLSDIEERHRQRYLDLIVNPEVRDVFRTRATIVRTMRRFLDERGFLEVETPTLQPIYGGASARPFITHHNQLKQDLYLRIAVELYLKRLIVGGFERVYEISKVFRNEGVDRTHNPEFTMMECYQAYADYHDMMRLVEDLYRALALEVTGSTTIVFQGQTIDFGPAWRRVSIPAAIAERTGIDILELTELEPLQEAIRAAGLKVDLKPGWGRQVDELFSVYVQPALIQPTFVLDHPVALSPLAKRRPDQPLLVERFEPVVAGMEIGNAFTELNDPLDQEQRFLEQGRAYDAGDDEAQQMDVDFLNALMYGMPPTGGLGIGIDRTVMLFTDQPSIREVILFPHLRPRE.

Mg(2+) contacts are provided by Glu399 and Glu406.

Belongs to the class-II aminoacyl-tRNA synthetase family. As to quaternary structure, homodimer. It depends on Mg(2+) as a cofactor.

The protein resides in the cytoplasm. The enzyme catalyses tRNA(Lys) + L-lysine + ATP = L-lysyl-tRNA(Lys) + AMP + diphosphate. This is Lysine--tRNA ligase from Roseiflexus castenholzii (strain DSM 13941 / HLO8).